The primary structure comprises 273 residues: Peptidyl-prolyl cis-trans isomerase E (273 aa).

Residues methionine 1–proline 48 form the RRM domain. The tract at residues arginine 77–arginine 103 is disordered. Residues phenylalanine 115 to glutamate 271 form the PPIase cyclophilin-type domain.

The protein belongs to the cyclophilin-type PPIase family. PPIase E subfamily.

Its subcellular location is the cytoplasm. The catalysed reaction is [protein]-peptidylproline (omega=180) = [protein]-peptidylproline (omega=0). With respect to regulation, binds cyclosporin A (CsA). CsA mediates some of its effects via an inhibitory action on PPIase. In terms of biological role, PPIases accelerate the folding of proteins. It catalyzes the cis-trans isomerization of proline imidic peptide bonds in oligopeptides. This is Peptidyl-prolyl cis-trans isomerase E from Schistosoma mansoni (Blood fluke).